The chain runs to 440 residues: 3-phosphoshikimate 1-carboxyvinyltransferase (440 aa).

Positions 19, 20, and 24 each coordinate 3-phosphoshikimate. Lys-19 contacts phosphoenolpyruvate. The phosphoenolpyruvate site is built by Gly-92 and Arg-121. 4 residues coordinate 3-phosphoshikimate: Ser-166, Gln-168, Asp-315, and Lys-342. Gln-168 lines the phosphoenolpyruvate pocket. The Proton acceptor role is filled by Asp-315. Phosphoenolpyruvate is bound by residues Arg-346 and Arg-399.

The protein belongs to the EPSP synthase family. Monomer.

Its subcellular location is the cytoplasm. The enzyme catalyses 3-phosphoshikimate + phosphoenolpyruvate = 5-O-(1-carboxyvinyl)-3-phosphoshikimate + phosphate. The protein operates within metabolic intermediate biosynthesis; chorismate biosynthesis; chorismate from D-erythrose 4-phosphate and phosphoenolpyruvate: step 6/7. In terms of biological role, catalyzes the transfer of the enolpyruvyl moiety of phosphoenolpyruvate (PEP) to the 5-hydroxyl of shikimate-3-phosphate (S3P) to produce enolpyruvyl shikimate-3-phosphate and inorganic phosphate. The sequence is that of 3-phosphoshikimate 1-carboxyvinyltransferase from Leptospira interrogans serogroup Icterohaemorrhagiae serovar copenhageni (strain Fiocruz L1-130).